Reading from the N-terminus, the 128-residue chain is Protein ripply2 (128 aa).

The disordered stretch occupies residues 1 to 63 (MENAGGAEGT…HAAEAMPDGP (63 aa)). A compositionally biased stretch (low complexity) spans 9–22 (GTESGAAACAATDG). Positions 37 to 40 (WRPW) match the WRPW motif motif. The interval 77–112 (HPVRLFWPKSKCYDYLYQEAEALLKNFPIQATISFY) is ripply homology domain.

Belongs to the ripply family.

The protein resides in the nucleus. Plays a role in somitogenesis. Required for somite segregation and establishment of rostrocaudal polarity in somites. In Homo sapiens (Human), this protein is Protein ripply2 (RIPPLY2).